Here is a 359-residue protein sequence, read N- to C-terminus: DNA polymerase IV (359 aa).

One can recognise a UmuC domain in the interval 7–188; it reads IIHIDMDAFY…LPIGKFFGVG (182 aa). Residues Asp11 and Asp106 each coordinate Mg(2+). Glu107 is a catalytic residue.

It belongs to the DNA polymerase type-Y family. As to quaternary structure, monomer. Mg(2+) serves as cofactor.

It is found in the cytoplasm. It catalyses the reaction DNA(n) + a 2'-deoxyribonucleoside 5'-triphosphate = DNA(n+1) + diphosphate. Poorly processive, error-prone DNA polymerase involved in untargeted mutagenesis. Copies undamaged DNA at stalled replication forks, which arise in vivo from mismatched or misaligned primer ends. These misaligned primers can be extended by PolIV. Exhibits no 3'-5' exonuclease (proofreading) activity. May be involved in translesional synthesis, in conjunction with the beta clamp from PolIII. The polypeptide is DNA polymerase IV (Clostridium perfringens (strain SM101 / Type A)).